The sequence spans 541 residues: Metal transporter Nramp1 (541 aa).

Asn-17 carries N-linked (GlcNAc...) asparagine glycosylation. 10 consecutive transmembrane segments (helical) span residues 45–65, 78–98, 122–142, 153–173, 182–202, 222–242, 271–291, 315–335, 371–391, and 392–412; these read LFAY…PGNF, ELLW…SLAA, FILW…EVIG, IPVW…LALQ, LFIA…LGYA, GAAG…NLFL, GFAL…SGAV, FLLE…ALLA, SLAI…GAGK, and LIII…VPLL. Asn-426 carries an N-linked (GlcNAc...) asparagine glycan. 2 helical membrane passes run 430 to 450 and 465 to 485; these read ISSI…YYLA and VAAI…LAGV. N-linked (GlcNAc...) asparagine glycosylation is present at Asn-511.

This sequence belongs to the NRAMP (TC 2.A.55) family.

Its subcellular location is the membrane. In terms of biological role, probable divalent metal transporter. This chain is Metal transporter Nramp1, found in Populus trichocarpa (Western balsam poplar).